The chain runs to 428 residues: Probable glucose-6-phosphate isomerase (428 aa).

E269 serves as the catalytic Proton donor. Catalysis depends on residues H290 and K401.

The protein belongs to the GPI family.

Its subcellular location is the cytoplasm. It carries out the reaction alpha-D-glucose 6-phosphate = beta-D-fructose 6-phosphate. The protein operates within carbohydrate biosynthesis; gluconeogenesis. Its pathway is carbohydrate degradation; glycolysis; D-glyceraldehyde 3-phosphate and glycerone phosphate from D-glucose: step 2/4. Catalyzes the reversible isomerization of glucose-6-phosphate to fructose-6-phosphate. The polypeptide is Probable glucose-6-phosphate isomerase (Natronomonas pharaonis (strain ATCC 35678 / DSM 2160 / CIP 103997 / JCM 8858 / NBRC 14720 / NCIMB 2260 / Gabara) (Halobacterium pharaonis)).